The following is a 643-amino-acid chain: Threonine--tRNA ligase (643 aa).

A TGS domain is found at 1 to 61 (MPIITLPDGS…EQDATLEIIT (61 aa)). The catalytic stretch occupies residues 243–534 (DHRKIGKALD…ITEEYAGFFP (292 aa)). Residues Cys-334, His-385, and His-511 each coordinate Zn(2+).

Belongs to the class-II aminoacyl-tRNA synthetase family. As to quaternary structure, homodimer. Zn(2+) is required as a cofactor.

The protein localises to the cytoplasm. It carries out the reaction tRNA(Thr) + L-threonine + ATP = L-threonyl-tRNA(Thr) + AMP + diphosphate + H(+). Functionally, catalyzes the attachment of threonine to tRNA(Thr) in a two-step reaction: L-threonine is first activated by ATP to form Thr-AMP and then transferred to the acceptor end of tRNA(Thr). Also edits incorrectly charged L-seryl-tRNA(Thr). The sequence is that of Threonine--tRNA ligase from Haemophilus influenzae (strain PittGG).